We begin with the raw amino-acid sequence, 1463 residues long: Secretory phospholipase A2 receptor (1463 aa).

A signal peptide spans 1 to 20; that stretch reads MLLSPSLLLLLLLGAPRGCA. At 21-1397 the chain is on the extracellular side; that stretch reads EGVAAALTPE…ALPEKGPSHS (1377 aa). The Ricin B-type lectin domain maps to 38–161; sequence KGIFVIQSES…GSGGGDICEY (124 aa). 14 disulfides stabilise this stretch: C51/C64, C89/C106, C178/C204, C192/C219, C260/C354, C330/C346, C406/C501, C478/C493, C617/C634, C699/C796, C774/C788, C840/C937, C914/C929, and C1067/C1087. N-linked (GlcNAc...) asparagine glycosylation occurs at N93. Positions 173 to 221 constitute a Fibronectin type-II domain; it reads THGMPCMFPFQYNHQWHHECTREGREDDLLWCATTSRYERDEKWGFCPD. 8 C-type lectin domains span residues 238–355, 385–502, 522–643, 673–797, 819–938, 965–1096, 1121–1232, and 1257–1378; these read NSHI…YICK, YNRN…YICK, HGGF…MSLC, GLAS…WICK, YQDA…SICK, FNYK…GFVC, YGNR…GAIC, and FKSN…FICK. Residue N454 is glycosylated (N-linked (GlcNAc...) asparagine). N1123 carries an N-linked (GlcNAc...) asparagine glycan. Cystine bridges form between C1209-C1223, C1280-C1377, and C1354-C1369. A helical transmembrane segment spans residues 1398–1418; that stretch reads IIPLAVVLTLIVIVAICTLSF. Residues 1419–1463 are Cytoplasmic-facing; the sequence is CIYKHNGGFFRRLAGFRNPYYPATNFSTVYLEENILISDLEKSDQ. An Endocytosis signal motif is present at residues 1436-1442; sequence NPYYPAT.

Interacts with sPLA2-IB/PLA2G1B; this interaction mediates intracellular signaling as well as clearance of extracellular sPLA2-IB/PLA2G1B via endocytotic pathway. Interacts with sPLA2-X/PLA2G10; this interaction mediates sPLA2-X/PLA2G10 clearance and inactivation. In terms of processing, the secretory phospholipase A2 receptor form may be produced by the action of metalloproteinases. It contains all extracellular domains and only lacks transmembrane and cytosolic regions. It is however unclear whether this form is produced by proteolytic cleavage as suggested by some experiments, or by alternative splicing, as in the case of isoform 2 that shares all characteristics of secretory phospholipase A2 receptor form. As to expression, expressed in podocytes (at protein level). Present in lung macrophage (at protein level). Highly expressed in kidney. Also expressed in pancreas, amnion, choriodecidua and placenta. Isoform 2 is expressed at much lower level.

It localises to the cell membrane. The protein localises to the secreted. In terms of biological role, receptor for secretory phospholipase A2 (sPLA2). Acts as a receptor for phospholipase sPLA2-IB/PLA2G1B but not sPLA2-IIA/PLA2G2A. Also able to bind to snake PA2-like toxins. Although its precise function remains unclear, binding of sPLA2 to its receptor participates in both positive and negative regulation of sPLA2 functions as well as clearance of sPLA2. Binding of sPLA2-IB/PLA2G1B induces various effects depending on the cell type, such as activation of the mitogen-activated protein kinase (MAPK) cascade to induce cell proliferation, the production of lipid mediators, selective release of arachidonic acid in bone marrow-derived mast cells. In neutrophils, binding of sPLA2-IB/PLA2G1B can activate p38 MAPK to stimulate elastase release and cell adhesion. May be involved in responses in pro-inflammatory cytokine productions during endotoxic shock. Also has endocytic properties and rapidly internalizes sPLA2 ligands, which is particularly important for the clearance of extracellular sPLA2s to protect their potent enzymatic activities. The soluble secretory phospholipase A2 receptor form is circulating and acts as a negative regulator of sPLA2 functions by blocking the biological functions of sPLA2-IB/PLA2G1B. In podocytes, binding of sPLA2-IB/PLA2G1B can regulate podocyte survival and glomerular homeostasis. This is Secretory phospholipase A2 receptor (PLA2R1) from Homo sapiens (Human).